The chain runs to 195 residues: 4'-phosphopantetheinyl transferase AcpT (195 aa).

The protein belongs to the P-Pant transferase superfamily. Gsp/Sfp/HetI/AcpT family.

It carries out the reaction apo-[ACP] + CoA = holo-[ACP] + adenosine 3',5'-bisphosphate + H(+). May be involved in an alternative pathway for phosphopantetheinyl transfer and holo-ACP synthesis in E.coli. The native apo-protein substrate is unknown. Is able to functionally replace AcpS in vivo but only when expressed at high levels. The polypeptide is 4'-phosphopantetheinyl transferase AcpT (Escherichia coli (strain K12)).